We begin with the raw amino-acid sequence, 58 residues long: Potassium channel toxin alpha-KTx 1.6 (58 aa).

Residues 1 to 21 (MKISFLLLLAIVICSIGWTEA) form the signal peptide. A Pyrrolidone carboxylic acid modification is found at Q22. Disulfide bonds link C28–C49, C34–C54, and C38–C56.

Belongs to the short scorpion toxin superfamily. Potassium channel inhibitor family. Alpha-KTx 01 subfamily. Expressed by the venom gland.

The protein localises to the secreted. Its function is as follows. Potent blocker of both large-conductance calcium-activated potassium channels (KCa1.1/KCNMA1) and voltage-gated potassium channels (Kv1.3/KCNA3 and ERG1/Kv11.1/KCNH2). This Olivierus martensii (Manchurian scorpion) protein is Potassium channel toxin alpha-KTx 1.6.